Consider the following 465-residue polypeptide: Cysteine--tRNA ligase (465 aa).

Position 30 (Cys30) interacts with Zn(2+). A 'HIGH' region motif is present at residues 32–42; it reads ITVYDYCHVGH. Zn(2+)-binding residues include Cys214, His239, and Glu243. Residues 271–275 carry the 'KMSKS' region motif; that stretch reads KMSKS. Lys274 provides a ligand contact to ATP.

It belongs to the class-I aminoacyl-tRNA synthetase family. Monomer. Zn(2+) is required as a cofactor.

The protein localises to the cytoplasm. It carries out the reaction tRNA(Cys) + L-cysteine + ATP = L-cysteinyl-tRNA(Cys) + AMP + diphosphate. This chain is Cysteine--tRNA ligase, found in Burkholderia multivorans (strain ATCC 17616 / 249).